The following is a 229-amino-acid chain: 5'-methylthioadenosine/S-adenosylhomocysteine nucleosidase (229 aa).

Catalysis depends on Glu12, which acts as the Proton acceptor. Substrate-binding positions include Gly78, Ile152, and 173-174 (ME). The Proton donor role is filled by Asp197.

The protein belongs to the PNP/UDP phosphorylase family. MtnN subfamily.

The enzyme catalyses S-adenosyl-L-homocysteine + H2O = S-(5-deoxy-D-ribos-5-yl)-L-homocysteine + adenine. It catalyses the reaction S-methyl-5'-thioadenosine + H2O = 5-(methylsulfanyl)-D-ribose + adenine. It carries out the reaction 5'-deoxyadenosine + H2O = 5-deoxy-D-ribose + adenine. Its pathway is amino-acid biosynthesis; L-methionine biosynthesis via salvage pathway; S-methyl-5-thio-alpha-D-ribose 1-phosphate from S-methyl-5'-thioadenosine (hydrolase route): step 1/2. Catalyzes the irreversible cleavage of the glycosidic bond in both 5'-methylthioadenosine (MTA) and S-adenosylhomocysteine (SAH/AdoHcy) to adenine and the corresponding thioribose, 5'-methylthioribose and S-ribosylhomocysteine, respectively. Also cleaves 5'-deoxyadenosine, a toxic by-product of radical S-adenosylmethionine (SAM) enzymes, into 5-deoxyribose and adenine. This Histophilus somni (strain 2336) (Haemophilus somnus) protein is 5'-methylthioadenosine/S-adenosylhomocysteine nucleosidase.